Reading from the N-terminus, the 335-residue chain is MSWIGIKKAINRAGTQVMLKTGHIEQTIDKEYEFQEKRYRTMEENSIKLQKNLRLYLDSLRLLTNSQINIAESLNSFYGTNNDKRSSNISRTGSVNTGDKIQTIHEEEGEEKEEEENDNTTTTTTTTTTTITTTNTTYNYNNLIQEYYATIKQLNDSCIANLENPYNQTVLNPIARFNSYYIEINEIIKKRHNKLLDYDAMKNKLRKLIENPTTNISPSMKTNIIELNHNQYEEKLKIYNQELTEVESKYVEINNQLLIELPKLINHRISYFDPSFESFVKIQLRFFNENYHVLNQLQLKLDAQTRQDYIEGKLEDRIDDVLRKMKKLDITSGLD.

The BAR domain maps to 17–310; it reads VMLKTGHIEQ…LDAQTRQDYI (294 aa). Residues 30–56 adopt a coiled-coil conformation; it reads KEYEFQEKRYRTMEENSIKLQKNLRLY. The segment at 105-127 is disordered; the sequence is HEEEGEEKEEEENDNTTTTTTTT. Residues 107 to 118 show a composition bias toward acidic residues; sequence EEGEEKEEEEND. Positions 222–259 form a coiled coil; it reads TNIIELNHNQYEEKLKIYNQELTEVESKYVEINNQLLI.

It is found in the cytoplasm. The protein resides in the cytoskeleton. Functionally, component of a cytoskeletal structure that is required for membrane curvature. In Candida albicans (strain SC5314 / ATCC MYA-2876) (Yeast), this protein is RVS161-like protein RVS162.